A 339-amino-acid chain; its full sequence is FR-33289 synthase (339 aa).

Fe(2+)-binding residues include His150, Asp152, and His288.

This sequence belongs to the TfdA dioxygenase family. In terms of assembly, homodimer. It depends on Fe(2+) as a cofactor.

The enzyme catalyses 3-(N-acetyl-N-hydroxy)aminopropylphosphonate + 2-oxoglutarate + O2 = (R)-(3-(acetylhydroxyamino)-2-hydroxypropyl)phosphonate + succinate + CO2. It participates in antibiotic biosynthesis. In terms of biological role, monooxygenase involved in the biosynthesis of the phosphonate antibiotic FR-33289, an antimalarial agent. Catalyzes the oxidative decarboxylation of the antibiotic FR-900098 (3-(N-acetyl-N-hydroxy)aminopropylphosphonate) to form FR-33289 ((R)-(3-(acetylhydroxyamino)-2-hydroxypropyl)phosphonate). This is FR-33289 synthase from Streptomyces rubellomurinus (strain ATCC 31215).